Reading from the N-terminus, the 607-residue chain is Thymidine kinase (607 aa).

2 disordered regions span residues 1–160 (MAGF…ADST) and 180–215 (DDKS…PSGL). The span at 17-32 (KCQEDESPENERHENF) shows a compositional bias: basic and acidic residues. Composition is skewed to polar residues over residues 88–106 (AAVT…TSCP), 148–160 (RKTS…ADST), and 194–203 (RRPSSHSALK). Residue 291–298 (GAPGVGKT) participates in ATP binding. The active-site Proton acceptor is the Glu317. Position 355 (Gln355) interacts with substrate. An ATP-binding site is contributed by Arg445. Arg451 contributes to the substrate binding site.

The protein belongs to the herpesviridae thymidine kinase family. Homodimer.

Its subcellular location is the virion tegument. The protein localises to the host nucleus. The catalysed reaction is thymidine + ATP = dTMP + ADP + H(+). Functionally, catalyzes the transfer of the gamma-phospho group of ATP to thymidine to generate dTMP in the salvage pathway of pyrimidine synthesis. The dTMP serves as a substrate for DNA polymerase during viral DNA replication. Allows the virus to be reactivated and to grow in non-proliferative cells lacking a high concentration of phosphorylated nucleic acid precursors. This Epstein-Barr virus (strain GD1) (HHV-4) protein is Thymidine kinase.